The sequence spans 118 residues: Large ribosomal subunit protein uL18 (118 aa).

It belongs to the universal ribosomal protein uL18 family. As to quaternary structure, part of the 50S ribosomal subunit; part of the 5S rRNA/L5/L18/L25 subcomplex. Contacts the 5S and 23S rRNAs.

This is one of the proteins that bind and probably mediate the attachment of the 5S RNA into the large ribosomal subunit, where it forms part of the central protuberance. The chain is Large ribosomal subunit protein uL18 from Ralstonia pickettii (strain 12J).